Consider the following 760-residue polypeptide: Phosphatidylinositol N-acetylglucosaminyltransferase subunit Q (760 aa).

5 consecutive transmembrane segments (helical) span residues 278–298, 349–371, 378–400, 446–468, and 475–497; these read TVAS…WLHG, LYHI…HILW, CLGL…FHIY, LFIG…LYYL, and LLVV…LPLY. The disordered stretch occupies residues 696-748; sequence LAVGVEGPCQDEPPSPRHPLAPSAEQHPASGGLKQSLTPVPSGPGPSLPEPHG.

Belongs to the PIGQ family. Component of the glycosylphosphatidylinositol-N-acetylglucosaminyltransferase (GPI-GnT) complex composed at least by PIGA, PIGC, PIGH, PIGP, PIGQ, PIGY and DPM2. Interacts with PIGA, PIGH and PIGC.

The protein localises to the membrane. It participates in glycolipid biosynthesis; glycosylphosphatidylinositol-anchor biosynthesis. Functionally, part of the glycosylphosphatidylinositol-N-acetylglucosaminyltransferase (GPI-GnT) complex that catalyzes the transfer of N-acetylglucosamine from UDP-N-acetylglucosamine to phosphatidylinositol and participates in the first step of GPI biosynthesis. The chain is Phosphatidylinositol N-acetylglucosaminyltransferase subunit Q from Homo sapiens (Human).